We begin with the raw amino-acid sequence, 618 residues long: Membrane protein insertase YidC (618 aa).

6 consecutive transmembrane segments (helical) span residues 3-23, 363-383, 439-459, 478-498, 520-540, and 545-565; these read KNTITGLVLIGILLVGFSFLS, WGLSMGIVLLLLTIMVKIVVF, LPMLLQFPILMALFMFVPSAI, FITFPFHIPFLGNHLSLFCLL, PQMAAMKWMMYLMPIMFLFVL, and SGLNYYYFISTLISVVTMIIL.

It belongs to the OXA1/ALB3/YidC family. Type 1 subfamily. Interacts with the Sec translocase complex via SecD. Specifically interacts with transmembrane segments of nascent integral membrane proteins during membrane integration.

The protein localises to the cell membrane. In terms of biological role, required for the insertion and/or proper folding and/or complex formation of integral membrane proteins into the membrane. Involved in integration of membrane proteins that insert both dependently and independently of the Sec translocase complex, as well as at least some lipoproteins. Aids folding of multispanning membrane proteins. The sequence is that of Membrane protein insertase YidC from Bacteroides fragilis (strain YCH46).